A 412-amino-acid polypeptide reads, in one-letter code: GTPase Obg (412 aa).

Residues methionine 1–isoleucine 159 form the Obg domain. Residues alanine 160–arginine 327 enclose the OBG-type G domain. Residues glycine 166–serine 173, phenylalanine 191–histidine 195, aspartate 212–glycine 215, asparagine 279–aspartate 282, and serine 308–valine 310 each bind GTP. Mg(2+)-binding residues include serine 173 and threonine 193. The tract at residues alanine 335–glutamate 412 is disordered. Residues asparagine 385–glutamate 412 show a composition bias toward acidic residues.

It belongs to the TRAFAC class OBG-HflX-like GTPase superfamily. OBG GTPase family. In terms of assembly, monomer. The cofactor is Mg(2+).

It is found in the cytoplasm. In terms of biological role, an essential GTPase which binds GTP, GDP and possibly (p)ppGpp with moderate affinity, with high nucleotide exchange rates and a fairly low GTP hydrolysis rate. Plays a role in control of the cell cycle, stress response, ribosome biogenesis and in those bacteria that undergo differentiation, in morphogenesis control. The polypeptide is GTPase Obg (Paramagnetospirillum magneticum (strain ATCC 700264 / AMB-1) (Magnetospirillum magneticum)).